The primary structure comprises 514 residues: Serine--tRNA ligase, cytoplasmic (514 aa).

Position 1 is an N-acetylmethionine (methionine 1). The interval 9-61 (RVDKGGDPALIRETQEKRFKDPGLVDQLVKADSEWRRCRFRADNLNKLKNLCS) is interaction with tRNA. Serine 241 carries the phosphoserine modification. Residues threonine 271 and arginine 302 each contribute to the L-serine site. Residues 302 to 304 (RQE) and 318 to 321 (VHQF) contribute to the ATP site. Position 323 is an N6-acetyllysine (lysine 323). Position 325 (glutamate 325) interacts with L-serine. 391–394 (ELVS) contacts ATP. An L-serine-binding site is contributed by asparagine 427. The tract at residues 471–514 (VKPAPIDQEPSKKQKKQHEGSKKKAAARDVALESRLQNMEVTDA) is disordered. Residues 479 to 502 (EPSKKQKKQHEGSKKKAAARDVAL) are compositionally biased toward basic and acidic residues. The short motif at 482–494 (KKQKKQHEGSKKK) is the Nuclear localization signal element. The segment covering 505–514 (RLQNMEVTDA) has biased composition (polar residues).

Belongs to the class-II aminoacyl-tRNA synthetase family. Type-1 seryl-tRNA synthetase subfamily. Homodimer. The tRNA molecule may bind across the dimer. Interacts with SIRT2. Interacts with METTL6; interaction is required for the tRNA N(3)-methylcytidine methyltransferase activity of METTL6.

The protein localises to the cytoplasm. Its subcellular location is the nucleus. The enzyme catalyses tRNA(Ser) + L-serine + ATP = L-seryl-tRNA(Ser) + AMP + diphosphate + H(+). It catalyses the reaction tRNA(Sec) + L-serine + ATP = L-seryl-tRNA(Sec) + AMP + diphosphate + H(+). The protein operates within aminoacyl-tRNA biosynthesis; selenocysteinyl-tRNA(Sec) biosynthesis; L-seryl-tRNA(Sec) from L-serine and tRNA(Sec): step 1/1. Its function is as follows. Catalyzes the attachment of serine to tRNA(Ser) in a two-step reaction: serine is first activated by ATP to form Ser-AMP and then transferred to the acceptor end of tRNA(Ser). Is probably also able to aminoacylate tRNA(Sec) with serine, to form the misacylated tRNA L-seryl-tRNA(Sec), which will be further converted into selenocysteinyl-tRNA(Sec). In the nucleus, binds to the VEGFA core promoter and prevents MYC binding and transcriptional activation by MYC. Recruits SIRT2 to the VEGFA promoter, promoting deacetylation of histone H4 at 'Lys-16' (H4K16). Thereby, inhibits the production of VEGFA and sprouting angiogenesis mediated by VEGFA. In Macaca fascicularis (Crab-eating macaque), this protein is Serine--tRNA ligase, cytoplasmic (SARS1).